The following is a 281-amino-acid chain: Energy-coupling factor transporter ATP-binding protein EcfA2 (281 aa).

One can recognise an ABC transporter domain in the interval 3-242 (IKVTGLTYVY…TETLEEIGLA (240 aa)). 40–47 (GHTGSGKS) serves as a coordination point for ATP.

It belongs to the ABC transporter superfamily. Energy-coupling factor EcfA family. Forms a stable energy-coupling factor (ECF) transporter complex composed of 2 membrane-embedded substrate-binding proteins (S component), 2 ATP-binding proteins (A component) and 2 transmembrane proteins (T component).

It localises to the cell membrane. Its function is as follows. ATP-binding (A) component of a common energy-coupling factor (ECF) ABC-transporter complex. Unlike classic ABC transporters this ECF transporter provides the energy necessary to transport a number of different substrates. The sequence is that of Energy-coupling factor transporter ATP-binding protein EcfA2 from Acetivibrio thermocellus (strain ATCC 27405 / DSM 1237 / JCM 9322 / NBRC 103400 / NCIMB 10682 / NRRL B-4536 / VPI 7372) (Clostridium thermocellum).